The chain runs to 731 residues: Anaphase-promoting complex subunit 2 (731 aa).

Belongs to the cullin family. In terms of assembly, the APC/C is probably composed of at least 12 subunits: apc-2, apc-10, apc-11, cdc-26, emb-1, emb-27, emb-30, mat-1, mat-2, mat-3, such-1 and gfi-3.

It functions in the pathway protein modification; protein ubiquitination. Its function is as follows. Probable component of the anaphase promoting complex/cyclosome (APC/C), a cell cycle-regulated ubiquitin ligase that controls progression through mitosis and the G1 phase of the cell cycle. The APC/C complex acts by mediating ubiquitination and subsequent degradation of target proteins. Developmental role in early embryogenesis and the metaphase to anaphase transition in meiosis and mitosis. The sequence is that of Anaphase-promoting complex subunit 2 from Caenorhabditis elegans.